Here is a 679-residue protein sequence, read N- to C-terminus: Transmembrane protein 214-B (679 aa).

The segment at 1 to 94 (MASGAPDGKW…KKKPQSGDSV (94 aa)) is disordered. Over residues 18 to 30 (KSGERREGERKAL) the composition is skewed to basic and acidic residues. N-linked (GlcNAc...) asparagine glycosylation is found at Asn70, Asn298, and Asn322. Transmembrane regions (helical) follow at residues 468 to 488 (GGFP…GSVL) and 606 to 626 (LLLH…EAAV).

Belongs to the TMEM214 family. In terms of assembly, constitutively interacts with CASP4; required for the localization of procaspase 4 to the ER.

Its subcellular location is the endoplasmic reticulum membrane. Its function is as follows. Critical mediator, in cooperation with CASP4, of endoplasmic reticulum-stress induced apoptosis. Required or the activation of CASP4 following endoplasmic reticulum stress. In Xenopus laevis (African clawed frog), this protein is Transmembrane protein 214-B (tmem214-b).